The chain runs to 202 residues: uncharacterized protein (202 aa).

This is an uncharacterized protein from Dictyostelium discoideum (Social amoeba).